The chain runs to 492 residues: 3-ketoacyl-CoA synthase 5 (492 aa).

A run of 2 helical transmembrane segments spans residues 20–40 (LINN…AIEL) and 59–79 (LLHI…YFMS). An FAE domain is found at 76–365 (YFMSKPRTVY…FLSSLIGRKI (290 aa)). Residues C220, H299, H383, H387, H416, and N420 contribute to the active site.

Belongs to the thiolase-like superfamily. Chalcone/stilbene synthases family. Expressed in siliques, flowers, leaves and seedlings.

It localises to the membrane. It catalyses the reaction a very-long-chain acyl-CoA + malonyl-CoA + H(+) = a very-long-chain 3-oxoacyl-CoA + CO2 + CoA. Its pathway is lipid metabolism; fatty acid biosynthesis. Inhibited by K3 herbicides such as alachlor, allidochlor, anilofos, cafenstrole and flufenacet. Strongly inhibited by metazachlor and mefluidide. Mediates mostly the synthesis of VLCFAs from 26 to 30 carbons in length (e.g. C20:1, C26, C28, C30). In Arabidopsis thaliana (Mouse-ear cress), this protein is 3-ketoacyl-CoA synthase 5.